Reading from the N-terminus, the 250-residue chain is Cruxrhodopsin-3 (250 aa).

Residues 1 to 9 (MPAPEGEAI) are Extracellular-facing. The helical transmembrane segment at 10–27 (WLWLGTAGMFLGMLYFIA) threads the bilayer. Residues 28–41 (RGWGETDSRRQKFY) lie on the Cytoplasmic side of the membrane. The chain crosses the membrane as a helical span at residues 42–60 (IATILITAIAFVNYLAMAL). The Extracellular portion of the chain corresponds to 61-77 (GFGLTIVEIAGEQRPIY). Residues 78–94 (WARYSDWLFTTPLLLYD) traverse the membrane as a helical segment. At 95–105 (LGLLAGADRNT) the chain is on the cytoplasmic side. The chain crosses the membrane as a helical span at residues 106–125 (ISSLVSLDVLMIGTGLVATL). Over 126-138 (SAGSGVLSAGAER) the chain is Extracellular. Residues 139–158 (LVWWGISTAFLLVLLYFLFS) traverse the membrane as a helical segment. The Cytoplasmic portion of the chain corresponds to 159–176 (SLSGRVADLPSDTRSTFK). A helical transmembrane segment spans residues 177–195 (TLRNLVTVVWLVYPVWWLV). Topologically, residues 196 to 207 (GTEGIGLVGIGI) are extracellular. Residues 208-227 (ETAGFMVIDLVAKVGFGIIL) form a helical membrane-spanning segment. Lys-220 carries the N6-(retinylidene)lysine modification. Residues 228–250 (LRSHGVLDGAAETTGAGATATAD) lie on the Cytoplasmic side of the membrane.

This sequence belongs to the archaeal/bacterial/fungal opsin family. In terms of assembly, homotrimer. Binds bacterioruberin in the crevice between neighboring subunits.

Its subcellular location is the cell membrane. Functionally, light-driven proton pump. This Haloarcula vallismortis (Halobacterium vallismortis) protein is Cruxrhodopsin-3 (cop3).